The chain runs to 118 residues: MARIAGVNIPDNKHTVISLTYIYGVGRTTAQKICADAGVNPAAKIKDLSDEQIETLRGEVAKFTTEGDLRRDVNMKIKRLMDLGCYRGLRHRKGLPVRGQRTKTNARTRKGPRKPIRK.

The segment at 92 to 118 is disordered; sequence RKGLPVRGQRTKTNARTRKGPRKPIRK.

It belongs to the universal ribosomal protein uS13 family. Part of the 30S ribosomal subunit. Forms a loose heterodimer with protein S19. Forms two bridges to the 50S subunit in the 70S ribosome.

Functionally, located at the top of the head of the 30S subunit, it contacts several helices of the 16S rRNA. In the 70S ribosome it contacts the 23S rRNA (bridge B1a) and protein L5 of the 50S subunit (bridge B1b), connecting the 2 subunits; these bridges are implicated in subunit movement. Contacts the tRNAs in the A and P-sites. The sequence is that of Small ribosomal subunit protein uS13 from Pseudomonas putida (strain W619).